The chain runs to 144 residues: Giant hemoglobins B chain (144 aa).

The Globin domain maps to 3–144 (VCGPLQRLKV…LNVITNGIQG (142 aa)). Residue H96 participates in heme b binding.

Belongs to the globin family. As to quaternary structure, part of giant hemoglobin C1, V1 and V2. This worm has three different extracellular Hbs: two dissolved in the vascular blood, V1 (CA. 3,500 kDa) and V2 (CA. 400 kDa), and one in the coelomic fluid, C1 (CA. 400 kDa). V1 consists of four heme-containing, globin chains (B-E) and four linker chains (L1-L4). V2 consists of six globin chains (A-F) and C1 consists of five globin chains (A-E).

The protein localises to the secreted. It localises to the extracellular space. The protein is Giant hemoglobins B chain of Riftia pachyptila (Vent tube worm).